Here is a 516-residue protein sequence, read N- to C-terminus: Nucleolar complex protein 4 homolog (516 aa).

The next 3 helical transmembrane spans lie at serine 296 to isoleucine 316, phenylalanine 347 to alanine 367, and leucine 375 to leucine 395.

This sequence belongs to the CBF/MAK21 family.

It is found in the nucleus membrane. Its subcellular location is the nucleus. The protein localises to the nucleolus. This Mus musculus (Mouse) protein is Nucleolar complex protein 4 homolog (Noc4l).